Reading from the N-terminus, the 268-residue chain is Activator of basal transcription 1 (268 aa).

Residues 6-38 (KLVEEQKAAMEEEKEVNAEAAEELEEAEEASCN) are a coiled coil. One can recognise an RRM domain in the interval 47–144 (GIVYLGHVPP…RKRSPFRYDL (98 aa)). Residues 163–193 (AFERQVRRQRLRAEVAQAKRETDFYLRNVEQ) are a coiled coil. The interval 200–242 (ADGDATRPNSSWTFTQRPTEQELRAQKGARPGGRERARLATVQ) is disordered. Residues 206-217 (RPNSSWTFTQRP) show a composition bias toward polar residues.

The protein belongs to the ESF2/ABP1 family. Interacts with IGHMBP2. Interacts with ESF1/ABTAP.

The protein localises to the nucleus. It is found in the nucleolus. May be a novel TATA-binding protein (TBP) which can function as a basal transcription activator. Can act as a regulator of basal transcription for class II genes. The protein is Activator of basal transcription 1 (Abt1) of Rattus norvegicus (Rat).